The sequence spans 459 residues: Serine--tRNA ligase (459 aa).

254-256 (TAE) is an L-serine binding site. ATP-binding positions include 285–287 (RKE) and Val301. Glu308 serves as a coordination point for L-serine. An ATP-binding site is contributed by 372–375 (EMVS). Thr408 lines the L-serine pocket.

This sequence belongs to the class-II aminoacyl-tRNA synthetase family. Type-1 seryl-tRNA synthetase subfamily. As to quaternary structure, homodimer. The tRNA molecule binds across the dimer.

It localises to the cytoplasm. It catalyses the reaction tRNA(Ser) + L-serine + ATP = L-seryl-tRNA(Ser) + AMP + diphosphate + H(+). It carries out the reaction tRNA(Sec) + L-serine + ATP = L-seryl-tRNA(Sec) + AMP + diphosphate + H(+). Its pathway is aminoacyl-tRNA biosynthesis; selenocysteinyl-tRNA(Sec) biosynthesis; L-seryl-tRNA(Sec) from L-serine and tRNA(Sec): step 1/1. Functionally, catalyzes the attachment of serine to tRNA(Ser). Is also able to aminoacylate tRNA(Sec) with serine, to form the misacylated tRNA L-seryl-tRNA(Sec), which will be further converted into selenocysteinyl-tRNA(Sec). In Staphylothermus marinus (strain ATCC 43588 / DSM 3639 / JCM 9404 / F1), this protein is Serine--tRNA ligase.